A 164-amino-acid polypeptide reads, in one-letter code: V-type proton ATPase subunit c' (164 aa).

Topologically, residues 1 to 16 (MDMVASDNVYAPLYAP) are lumenal. A helical transmembrane segment spans residues 17–37 (FFGFAGCALAMILSCLGAAIG). Over 38-59 (TAKSGIGIAGIGTFKPELIMKS) the chain is Cytoplasmic. Residues 60 to 80 (LIPVVMSGILAIYGLVVAVLI) form a helical membrane-spanning segment. Residues 81 to 98 (AGNLSPTEEYTLFNGFMH) are Lumenal-facing. The helical transmembrane segment at 99–119 (LSCGLCVGFACLSSGYAIGIV) threads the bilayer. Topologically, residues 120-136 (GDVGVRKYMHQPRLFVG) are cytoplasmic. Residues 137 to 157 (IVLILIFSEVLGLYGMIIALI) form a helical membrane-spanning segment. Residues 158–164 (LNTKGSE) lie on the Lumenal side of the membrane.

The protein belongs to the V-ATPase proteolipid subunit family. V-ATPase is a heteromultimeric enzyme composed of a peripheral catalytic V1 complex (components A to H) attached to an integral membrane V0 proton pore complex (components: a, c, c', c'', d, e, f and VOA1). The decameric c-ring forms the proton-conducting pore, and is composed of eight proteolipid subunits c, one subunit c' and one subunit c''.

It is found in the vacuole membrane. Proton-conducting pore forming subunit of the V0 complex of vacuolar(H+)-ATPase (V-ATPase), a multisubunit enzyme composed of a peripheral complex (V1) that hydrolyzes ATP and a membrane integral complex (V0) that translocates protons. V-ATPase is responsible for acidifying and maintaining the pH of intracellular compartments. This chain is V-type proton ATPase subunit c' (VMA11), found in Candida glabrata (strain ATCC 2001 / BCRC 20586 / JCM 3761 / NBRC 0622 / NRRL Y-65 / CBS 138) (Yeast).